Here is a 167-residue protein sequence, read N- to C-terminus: Large ribosomal subunit protein uL10 (167 aa).

This sequence belongs to the universal ribosomal protein uL10 family. In terms of assembly, part of the ribosomal stalk of the 50S ribosomal subunit. The N-terminus interacts with L11 and the large rRNA to form the base of the stalk. The C-terminus forms an elongated spine to which L12 dimers bind in a sequential fashion forming a multimeric L10(L12)X complex.

Forms part of the ribosomal stalk, playing a central role in the interaction of the ribosome with GTP-bound translation factors. This Yersinia enterocolitica serotype O:8 / biotype 1B (strain NCTC 13174 / 8081) protein is Large ribosomal subunit protein uL10.